We begin with the raw amino-acid sequence, 366 residues long: Chorismate synthase (366 aa).

Positions 48 and 54 each coordinate NADP(+). FMN-binding positions include 125–127, 238–239, Gly278, 293–297, and Arg319; these read RSS, NA, and KPTSS.

Belongs to the chorismate synthase family. In terms of assembly, homotetramer. FMNH2 is required as a cofactor.

The enzyme catalyses 5-O-(1-carboxyvinyl)-3-phosphoshikimate = chorismate + phosphate. The protein operates within metabolic intermediate biosynthesis; chorismate biosynthesis; chorismate from D-erythrose 4-phosphate and phosphoenolpyruvate: step 7/7. In terms of biological role, catalyzes the anti-1,4-elimination of the C-3 phosphate and the C-6 proR hydrogen from 5-enolpyruvylshikimate-3-phosphate (EPSP) to yield chorismate, which is the branch point compound that serves as the starting substrate for the three terminal pathways of aromatic amino acid biosynthesis. This reaction introduces a second double bond into the aromatic ring system. The sequence is that of Chorismate synthase from Paraburkholderia phytofirmans (strain DSM 17436 / LMG 22146 / PsJN) (Burkholderia phytofirmans).